The primary structure comprises 434 residues: Serine hydroxymethyltransferase (434 aa).

(6S)-5,6,7,8-tetrahydrofolate is bound by residues Leu133 and 137–139; that span reads GHL. Lys242 carries the N6-(pyridoxal phosphate)lysine modification.

This sequence belongs to the SHMT family. In terms of assembly, homodimer. It depends on pyridoxal 5'-phosphate as a cofactor.

Its subcellular location is the cytoplasm. The catalysed reaction is (6R)-5,10-methylene-5,6,7,8-tetrahydrofolate + glycine + H2O = (6S)-5,6,7,8-tetrahydrofolate + L-serine. The protein operates within one-carbon metabolism; tetrahydrofolate interconversion. It functions in the pathway amino-acid biosynthesis; glycine biosynthesis; glycine from L-serine: step 1/1. Catalyzes the reversible interconversion of serine and glycine with tetrahydrofolate (THF) serving as the one-carbon carrier. This reaction serves as the major source of one-carbon groups required for the biosynthesis of purines, thymidylate, methionine, and other important biomolecules. Also exhibits THF-independent aldolase activity toward beta-hydroxyamino acids, producing glycine and aldehydes, via a retro-aldol mechanism. This chain is Serine hydroxymethyltransferase, found in Methylorubrum populi (strain ATCC BAA-705 / NCIMB 13946 / BJ001) (Methylobacterium populi).